Reading from the N-terminus, the 105-residue chain is Acylphosphatase (105 aa).

In terms of domain architecture, Acylphosphatase-like spans 16–105 (RLTAWVRGRV…RGGYSGFTQA (90 aa)). Residues Arg-31 and Asn-49 contribute to the active site.

The protein belongs to the acylphosphatase family.

The enzyme catalyses an acyl phosphate + H2O = a carboxylate + phosphate + H(+). In Acidothermus cellulolyticus (strain ATCC 43068 / DSM 8971 / 11B), this protein is Acylphosphatase (acyP).